The following is a 63-amino-acid chain: Large ribosomal subunit protein bL28 (63 aa).

The protein belongs to the bacterial ribosomal protein bL28 family.

The protein is Large ribosomal subunit protein bL28 of Kosmotoga olearia (strain ATCC BAA-1733 / DSM 21960 / TBF 19.5.1).